The sequence spans 290 residues: GTPase Era (290 aa).

Residues 2 to 169 (KSGFAAILGR…KNKIYENFSE (168 aa)) form the Era-type G domain. The G1 stretch occupies residues 10–17 (GRPSTGKS). 10 to 17 (GRPSTGKS) is a binding site for GTP. The interval 36-40 (QTTRN) is G2. A G3 region spans residues 57 to 60 (DTPG). GTP-binding positions include 57–61 (DTPGF) and 119–122 (NKID). The tract at residues 119–122 (NKID) is G4. The segment at 148 to 150 (ISA) is G5. One can recognise a KH type-2 domain in the interval 200 to 276 (LKEELPYSLY…NLFLQVKLKK (77 aa)).

It belongs to the TRAFAC class TrmE-Era-EngA-EngB-Septin-like GTPase superfamily. Era GTPase family. As to quaternary structure, monomer.

The protein localises to the cytoplasm. Its subcellular location is the cell inner membrane. An essential GTPase that binds both GDP and GTP, with rapid nucleotide exchange. Plays a role in 16S rRNA processing and 30S ribosomal subunit biogenesis and possibly also in cell cycle regulation and energy metabolism. The protein is GTPase Era of Borreliella burgdorferi (strain ATCC 35210 / DSM 4680 / CIP 102532 / B31) (Borrelia burgdorferi).